Reading from the N-terminus, the 320-residue chain is N-acetylneuraminate lyase (320 aa).

Aceneuramate is bound by residues Thr-51 and Thr-52. Tyr-143 serves as the catalytic Proton donor. Residue Lys-173 is the Schiff-base intermediate with substrate of the active site. Ser-175, Gly-199, Asp-201, Glu-202, and Ser-218 together coordinate aceneuramate.

Belongs to the DapA family. NanA subfamily. Homotetramer. As to expression, isoform 2 is expressed in placenta, liver, kidney, pancreas, spleen, thymus, ovary, small intestine and peripheral blood leukocyte.

It localises to the cytoplasm. It catalyses the reaction aceneuramate = aldehydo-N-acetyl-D-mannosamine + pyruvate. The protein operates within amino-sugar metabolism; N-acetylneuraminate degradation. Its function is as follows. Catalyzes the cleavage of N-acetylneuraminic acid (sialic acid) to form pyruvate and N-acetylmannosamine via a Schiff base intermediate. It prevents sialic acids from being recycled and returning to the cell surface. Involved in the N-glycolylneuraminic acid (Neu5Gc) degradation pathway. Although human is not able to catalyze formation of Neu5Gc due to the inactive CMAHP enzyme, Neu5Gc is present in food and must be degraded. This is N-acetylneuraminate lyase from Homo sapiens (Human).